Reading from the N-terminus, the 265-residue chain is uncharacterized protein (265 aa).

This is an uncharacterized protein from Mycoplasma capricolum subsp. capricolum (strain California kid / ATCC 27343 / NCTC 10154).